The following is a 101-amino-acid chain: Large ribosomal subunit protein bL21 (101 aa).

The protein belongs to the bacterial ribosomal protein bL21 family. As to quaternary structure, part of the 50S ribosomal subunit. Contacts protein L20.

Functionally, this protein binds to 23S rRNA in the presence of protein L20. In Thermus thermophilus (strain ATCC BAA-163 / DSM 7039 / HB27), this protein is Large ribosomal subunit protein bL21.